A 161-amino-acid polypeptide reads, in one-letter code: MQFMGTASRMASTQRAKPMEMPRISRDTARMLVNYLTYQAVCVIRDQLAETNPAGAYRLQVFSAEFSFQDGEAYLAALLNHDRELGLRVMTVREHLAEHILDYLPEMTIAQIQEANINHRRALLERLTGLGAEPSLPETEVSDRPSDSATPDDASNASHAD.

2 disordered regions span residues 1–20 and 130–161; these read MQFM…KPME and LGAE…SHAD. The segment covering 147-161 has biased composition (polar residues); that stretch reads DSATPDDASNASHAD.

This sequence belongs to the RbcX family. In terms of assembly, homodimer. Interacts with the exposed C-terminal peptide of endogenous RbcL ('Lys-460-Asp-470') via its central cleft, as well as C-terminal peptides from other cyanobacterial RbcL. Contacts a second RbcL monomer via its peripheral polar surface.

The protein localises to the carboxysome. It localises to the cytoplasm. Its function is as follows. An RbcL-specific chaperone. The central cleft of the RbcX homodimer (RbcX2) binds the C-terminus of an RbcL monomer, stabilizing the C-terminus and probably preventing its reassociation with chaperonin GroEL-ES. At the same time the peripheral region of RbcX2 binds a second RbcL monomer, bridging the RbcL homodimers in the correct orientation. The RbcX2(2)-bound RbcL dimers then assemble into the RbcL8 core (RbcL8-(RbcX2)8). RbcS binding triggers the release of RbcX2. This is RuBisCO chaperone RbcX from Synechococcus sp. (strain ATCC 27144 / PCC 6301 / SAUG 1402/1) (Anacystis nidulans).